We begin with the raw amino-acid sequence, 125 residues long: Small ribosomal subunit protein uS13 (125 aa).

The interval 90 to 125 (QRHRKGLPVRGQRTKTNARTRKGPKRTVAGKKKATK) is disordered.

Belongs to the universal ribosomal protein uS13 family. In terms of assembly, part of the 30S ribosomal subunit. Forms a loose heterodimer with protein S19. Forms two bridges to the 50S subunit in the 70S ribosome.

In terms of biological role, located at the top of the head of the 30S subunit, it contacts several helices of the 16S rRNA. In the 70S ribosome it contacts the 23S rRNA (bridge B1a) and protein L5 of the 50S subunit (bridge B1b), connecting the 2 subunits; these bridges are implicated in subunit movement. Contacts the tRNAs in the A and P-sites. The polypeptide is Small ribosomal subunit protein uS13 (Bifidobacterium longum (strain DJO10A)).